Reading from the N-terminus, the 212-residue chain is Lysozyme g-like protein 2 (212 aa).

Positions 1 to 19 (MLSSVVFWGLIALIGTSRG) are cleaved as a signal peptide. 2 cysteine pairs are disulfide-bonded: C39-C92 and C53-C61. Residue E105 is part of the active site.

This sequence belongs to the glycosyl hydrolase 23 family. Strong expression detected in the eye and weak expression in the testis. No expression is observed in any other tissues.

Its subcellular location is the secreted. Its function is as follows. May act as a potent antibacterial protein that may play a role in the innate immunity. This Homo sapiens (Human) protein is Lysozyme g-like protein 2 (LYG2).